The chain runs to 157 residues: Eukaryotic translation initiation factor 5A-1 (157 aa).

Lysine 52 carries the post-translational modification Hypusine. 2 positions are modified to phosphoserine: serine 75 and serine 77. Threonine 78 carries the phosphothreonine modification.

This sequence belongs to the eIF-5A family. Lys-52 undergoes hypusination, a unique post-translational modification that consists in the addition of a butylamino group from spermidine to lysine side chain, leading to the formation of the unusual amino acid hypusine. eIF-5As are the only known proteins to undergo this modification, which is essential for their function.

The protein localises to the cytoplasm. Its function is as follows. Translation factor that promotes translation elongation and termination, particularly upon ribosome stalling at specific amino acid sequence contexts. Binds between the exit (E) and peptidyl (P) site of the ribosome and promotes rescue of stalled ribosome: specifically required for efficient translation of polyproline-containing peptides as well as other motifs that stall the ribosome. Acts as a ribosome quality control (RQC) cofactor by joining the RQC complex to facilitate peptidyl transfer during CAT tailing step. This is Eukaryotic translation initiation factor 5A-1 (tif51a) from Schizosaccharomyces pombe (strain 972 / ATCC 24843) (Fission yeast).